The sequence spans 944 residues: DNA ligase 4 (944 aa).

ATP is bound by residues Glu280, Lys282, Arg287, Glu340, Phe382, Glu442, Lys447, Lys464, and Lys466. Lys282 serves as the catalytic N6-AMP-lysine intermediate. Position 340 (Glu340) interacts with Mg(2+). Mg(2+) is bound at residue Glu442. 2 consecutive BRCT domains span residues 681-780 and 836-941; these read PISN…PNYC and FPLF…DFPV.

This sequence belongs to the ATP-dependent DNA ligase family. Component of the DNA ligase IV complex, composed of DNL4, LIF1 and NEJ1. Interacts (via BRCT domain) with LIF1. Interacts with NEJ1. Interacts with POL4 in the DNL4-LIF1 complex. Mg(2+) serves as cofactor.

The protein localises to the nucleus. The catalysed reaction is ATP + (deoxyribonucleotide)n-3'-hydroxyl + 5'-phospho-(deoxyribonucleotide)m = (deoxyribonucleotide)n+m + AMP + diphosphate.. Its function is as follows. DNA ligase involved in DNA non-homologous end joining (NHEJ); required for double-strand break (DSB) repair. The chain is DNA ligase 4 (DNL4) from Saccharomyces cerevisiae (strain ATCC 204508 / S288c) (Baker's yeast).